Here is a 505-residue protein sequence, read N- to C-terminus: Aspartyl/glutamyl-tRNA(Asn/Gln) amidotransferase subunit B (505 aa).

Positions 220–241 are disordered; the sequence is NVSLRPRPAPGDPDAPFGTRSE.

This sequence belongs to the GatB/GatE family. GatB subfamily. Heterotrimer of A, B and C subunits.

It catalyses the reaction L-glutamyl-tRNA(Gln) + L-glutamine + ATP + H2O = L-glutaminyl-tRNA(Gln) + L-glutamate + ADP + phosphate + H(+). The enzyme catalyses L-aspartyl-tRNA(Asn) + L-glutamine + ATP + H2O = L-asparaginyl-tRNA(Asn) + L-glutamate + ADP + phosphate + 2 H(+). Functionally, allows the formation of correctly charged Asn-tRNA(Asn) or Gln-tRNA(Gln) through the transamidation of misacylated Asp-tRNA(Asn) or Glu-tRNA(Gln) in organisms which lack either or both of asparaginyl-tRNA or glutaminyl-tRNA synthetases. The reaction takes place in the presence of glutamine and ATP through an activated phospho-Asp-tRNA(Asn) or phospho-Glu-tRNA(Gln). This is Aspartyl/glutamyl-tRNA(Asn/Gln) amidotransferase subunit B from Frankia casuarinae (strain DSM 45818 / CECT 9043 / HFP020203 / CcI3).